The following is a 287-amino-acid chain: Transcription initiation factor IIB 1 (287 aa).

Residues His3–Thr31 form a TFIIB-type zinc finger. Zn(2+) is bound by residues Cys7, Cys10, Cys23, and Cys26. Positions Glu40 to Glu53 are enriched in basic and acidic residues. The interval Glu40 to Arg63 is disordered. 2 repeat units span residues Thr111–Leu194 and Glu205–Asp286.

It belongs to the TFIIB family.

In terms of biological role, stabilizes TBP binding to an archaeal box-A promoter. Also responsible for recruiting RNA polymerase II to the pre-initiation complex (DNA-TBP-TFIIB). This is Transcription initiation factor IIB 1 from Halobacterium salinarum (strain ATCC 700922 / JCM 11081 / NRC-1) (Halobacterium halobium).